A 206-amino-acid polypeptide reads, in one-letter code: Guanylate kinase (206 aa).

The 179-residue stretch at 7 to 185 (GLLIVISGPS…AVEKIRAIII (179 aa)) folds into the Guanylate kinase-like domain. 14-21 (GPSGAGKG) is a binding site for ATP.

This sequence belongs to the guanylate kinase family.

Its subcellular location is the cytoplasm. The enzyme catalyses GMP + ATP = GDP + ADP. Functionally, essential for recycling GMP and indirectly, cGMP. This chain is Guanylate kinase, found in Caldanaerobacter subterraneus subsp. tengcongensis (strain DSM 15242 / JCM 11007 / NBRC 100824 / MB4) (Thermoanaerobacter tengcongensis).